Reading from the N-terminus, the 370-residue chain is Forkhead box protein J1.2 (370 aa).

A disordered region spans residues 45–74 (ANSRPPVPRVSQGPCSPPAGDTASCQAPRT). A DNA-binding region (fork-head) is located at residues 108–202 (KPPYSYATLI…VNGVLKRRRM (95 aa)). The segment at 227–246 (PGSHHMQHISGGHRQSRRYE) is disordered.

Belongs to the FOXJ1 family.

It localises to the nucleus. Its function is as follows. Key transcription factor required for motile ciliogenesis. Activates genes essential for motile cilia formation and function. The polypeptide is Forkhead box protein J1.2 (Xenopus laevis (African clawed frog)).